The sequence spans 284 residues: Release factor glutamine methyltransferase (284 aa).

S-adenosyl-L-methionine is bound by residues 121–125 (GTGTG), Asp144, Trp172, and Asn188. A substrate-binding site is contributed by 188-191 (NPPY).

This sequence belongs to the protein N5-glutamine methyltransferase family. PrmC subfamily.

It catalyses the reaction L-glutaminyl-[peptide chain release factor] + S-adenosyl-L-methionine = N(5)-methyl-L-glutaminyl-[peptide chain release factor] + S-adenosyl-L-homocysteine + H(+). Methylates the class 1 translation termination release factors RF1/PrfA and RF2/PrfB on the glutamine residue of the universally conserved GGQ motif. The chain is Release factor glutamine methyltransferase from Aliivibrio fischeri (strain ATCC 700601 / ES114) (Vibrio fischeri).